Here is a 426-residue protein sequence, read N- to C-terminus: Enolase (426 aa).

Gln-163 is a (2R)-2-phosphoglycerate binding site. The active-site Proton donor is the Glu-205. Asp-242, Glu-286, and Asp-313 together coordinate Mg(2+). 4 residues coordinate (2R)-2-phosphoglycerate: Lys-338, Arg-367, Ser-368, and Lys-389. Lys-338 functions as the Proton acceptor in the catalytic mechanism.

This sequence belongs to the enolase family. The cofactor is Mg(2+).

It is found in the cytoplasm. The protein localises to the secreted. Its subcellular location is the cell surface. It carries out the reaction (2R)-2-phosphoglycerate = phosphoenolpyruvate + H2O. The protein operates within carbohydrate degradation; glycolysis; pyruvate from D-glyceraldehyde 3-phosphate: step 4/5. Functionally, catalyzes the reversible conversion of 2-phosphoglycerate (2-PG) into phosphoenolpyruvate (PEP). It is essential for the degradation of carbohydrates via glycolysis. In Helicobacter acinonychis (strain Sheeba), this protein is Enolase.